Consider the following 185-residue polypeptide: Elongation factor P (185 aa).

This sequence belongs to the elongation factor P family.

The protein localises to the cytoplasm. It functions in the pathway protein biosynthesis; polypeptide chain elongation. Involved in peptide bond synthesis. Stimulates efficient translation and peptide-bond synthesis on native or reconstituted 70S ribosomes in vitro. Probably functions indirectly by altering the affinity of the ribosome for aminoacyl-tRNA, thus increasing their reactivity as acceptors for peptidyl transferase. The polypeptide is Elongation factor P (Bacillus anthracis (strain CDC 684 / NRRL 3495)).